The following is a 238-amino-acid chain: Probable transcriptional regulatory protein SSP2054 (238 aa).

This sequence belongs to the TACO1 family. YeeN subfamily.

The protein localises to the cytoplasm. The sequence is that of Probable transcriptional regulatory protein SSP2054 from Staphylococcus saprophyticus subsp. saprophyticus (strain ATCC 15305 / DSM 20229 / NCIMB 8711 / NCTC 7292 / S-41).